A 146-amino-acid chain; its full sequence is MKLHELKPAEGSRKVRNRVGRGIGSGNGKTAGKGHKGQNARSGGGVRPGFEGGQNPLYRRLPKRGFTNPTRKEFAVVNLEKLNRFEDGTEVSPELLLETGVVSNAKDGIKILGNGKLEKKLTVKANKFSASAVEAIEAAGGKTEVI.

Residues 1-13 are compositionally biased toward basic and acidic residues; that stretch reads MKLHELKPAEGSR. Residues 1 to 65 form a disordered region; that stretch reads MKLHELKPAE…PLYRRLPKRG (65 aa). Composition is skewed to gly residues over residues 21 to 31 and 42 to 52; these read RGIGSGNGKTA and SGGGVRPGFEG.

The protein belongs to the universal ribosomal protein uL15 family. In terms of assembly, part of the 50S ribosomal subunit.

Binds to the 23S rRNA. This Halalkalibacterium halodurans (strain ATCC BAA-125 / DSM 18197 / FERM 7344 / JCM 9153 / C-125) (Bacillus halodurans) protein is Large ribosomal subunit protein uL15.